Reading from the N-terminus, the 457-residue chain is Cysteine--tRNA ligase (457 aa).

Cys30 lines the Zn(2+) pocket. Residues 32-42 (PTVYAPAHIGN) carry the 'HIGH' region motif. The Zn(2+) site is built by Cys221, His246, and Glu250. The short motif at 278 to 282 (KMSKS) is the 'KMSKS' region element. An ATP-binding site is contributed by Lys281.

It belongs to the class-I aminoacyl-tRNA synthetase family. In terms of assembly, monomer. It depends on Zn(2+) as a cofactor.

It is found in the cytoplasm. The catalysed reaction is tRNA(Cys) + L-cysteine + ATP = L-cysteinyl-tRNA(Cys) + AMP + diphosphate. This chain is Cysteine--tRNA ligase, found in Opitutus terrae (strain DSM 11246 / JCM 15787 / PB90-1).